The primary structure comprises 701 residues: MDLWNLSWFLFLDALLVISGLATPENFDVDGGMDQDIFDINEGLGLDLFEGDIRLDRAQIRNSIIGEKYRWPHTIPYVLEDSLEMNAKGVILNAFERYRLKTCIDFKPWAGETNYISVFKGSGCWSSVGNRRVGKQELSIGANCDRIATVQHEFLHALGFWHEQSRSDRDDYVRIMWDRILSGREHNFNTYSDDISDSLNVPYDYTSVMHYSKTAFQNGTEPTIVTRISDFEDVIGQRMDFSDSDLLKLNQLYNCSSSLSFMDSCSFELENVCGMIQSSGDNADWQRVSQVPRGPESDHSNMGQCQGSGFFMHFDSSSVNVGATAVLESRTLYPKRGFQCLQFYLYNSGSESDQLNIYIREYSADNVDGNLTLVEEIKEIPTGSWQLYHVTLKVTKKFRVVFEGRKGSGASLGGLSIDDINLSETRCPHHIWHIRNFTQFIGSPNGTLYSPPFYSSKGYAFQIYLNLAHVTNAGIYFHLISGANDDQLQWPCPWQQATMTLLDQNPDIRQRMSNQRSITTDPFMTTDNGNYFWDRPSKVGTVALFSNGTQFRRGGGYGTSAFITHERLKSRDFIKGDDVYILLTVEDISHLNSTQIQLTPAPSVQDLCSKTTCKNDGVCTVRDGKAECRCQSGEDWWYMGERCEKRGSTRDTIVIAVSSTVAVFALMLIITLVSVYCTRKKYRERMSSNRPNLTPQNQHAF.

The first 22 residues, 1–22, serve as a signal peptide directing secretion; the sequence is MDLWNLSWFLFLDALLVISGLA. Positions 23-61 are excised as a propeptide; it reads TPENFDVDGGMDQDIFDINEGLGLDLFEGDIRLDRAQIR. Over 23-652 the chain is Extracellular; it reads TPENFDVDGG…CEKRGSTRDT (630 aa). Residues 62–256 form the Peptidase M12A domain; it reads NSIIGEKYRW…LKLNQLYNCS (195 aa). 3 disulfide bridges follow: C103–C255, C124–C144, and C265–C427. H152 serves as a coordination point for Zn(2+). E153 is a catalytic residue. Zn(2+) is bound by residues H156 and H162. Residues N218, N254, N370, N421, N436, N445, N547, and N592 are each glycosylated (N-linked (GlcNAc...) asparagine). One can recognise an MAM domain in the interval 260-429; sequence SFMDSCSFEL…INLSETRCPH (170 aa). In terms of domain architecture, MATH spans 430-585; it reads HIWHIRNFTQ…GDDVYILLTV (156 aa). Residue S593 is glycosylated (O-linked (GalNAc...) serine). O-linked (GalNAc...) threonine glycosylation is found at T594 and T599. Residues 595-607 form a required for proteolytic processing region; that stretch reads QIQLTPAPSVQDL. S603 carries O-linked (GalNAc...) serine glycosylation. The region spanning 604-644 is the EGF-like domain; sequence VQDLCSKTTCKNDGVCTVRDGKAECRCQSGEDWWYMGERCE. Disulfide bonds link C608-C619, C613-C628, and C630-C643. A helical transmembrane segment spans residues 653–673; it reads IVIAVSSTVAVFALMLIITLV. Over 674-701 the chain is Cytoplasmic; that stretch reads SVYCTRKKYRERMSSNRPNLTPQNQHAF. T694 is modified (phosphothreonine).

Homotetramer consisting of disulfide-linked beta subunits, or heterotetramer of two alpha and two beta subunits formed by non-covalent association of two disulfide-linked heterodimers. Interacts with MBL2 through its carbohydrate moiety. This interaction may inhibit its catalytic activity. Interacts with TSPAN8. The cofactor is Zn(2+). Phosphorylated by PKC at multiple sites of its cytoplasmic part. Phosphorylation dcreases activity at the cell surface, leading to diminished substrate cleavage. In terms of processing, N-glycosylated; contains high mannose and/or complex biantennary structures. Post-translationally, O-glycosylation protect the C-terminal region from proteolytic cleavage and diminish secretion, this seems to be specific to human. Proteolytically activated by trypsin in the intestinal lumen and kallikrein-related peptidases in other tissues. The major site of expression is the brush border membrane of small intestinal and kidney epithelial cells.

Its subcellular location is the cell membrane. The protein localises to the secreted. The catalysed reaction is Hydrolysis of proteins, including azocasein, and peptides. Hydrolysis of 5-His-|-Leu-6, 6-Leu-|-Cys-7, 14-Ala-|-Leu-15 and 19-Cys-|-Gly-20 bonds in insulin B chain.. With respect to regulation, strongly inhibited by fetuin-A/AHSG. Its function is as follows. Membrane metallopeptidase that sheds many membrane-bound proteins. Exhibits a strong preference for acidic amino acids at the P1' position. Known substrates include: FGF19, VGFA, IL1B, IL18, procollagen I and III, E-cadherin, KLK7, gastrin, ADAM10, tenascin-C. The presence of several pro-inflammatory cytokine among substrates implicate MEP1B in inflammation. It is also involved in tissue remodeling due to its capability to degrade extracellular matrix components. Also cleaves the amyloid precursor protein/APP, thereby releasing neurotoxic amyloid beta peptides. The sequence is that of Meprin A subunit beta (MEP1B) from Homo sapiens (Human).